Consider the following 296-residue polypeptide: Cytidine deaminase (296 aa).

2 consecutive CMP/dCMP-type deaminase domains span residues 47–167 (ELNE…FGPS) and 186–296 (DSND…VEPE). Residue 88 to 90 (NIE) coordinates substrate. His101 is a binding site for Zn(2+). Catalysis depends on Glu103, which acts as the Proton donor. Cys128 and Cys131 together coordinate Zn(2+).

It belongs to the cytidine and deoxycytidylate deaminase family. In terms of assembly, homodimer. Requires Zn(2+) as cofactor.

It catalyses the reaction cytidine + H2O + H(+) = uridine + NH4(+). The catalysed reaction is 2'-deoxycytidine + H2O + H(+) = 2'-deoxyuridine + NH4(+). Its function is as follows. This enzyme scavenges exogenous and endogenous cytidine and 2'-deoxycytidine for UMP synthesis. This chain is Cytidine deaminase, found in Shewanella pealeana (strain ATCC 700345 / ANG-SQ1).